The primary structure comprises 345 residues: UDP-3-O-acylglucosamine N-acyltransferase (345 aa).

The active-site Proton acceptor is the H253.

The protein belongs to the transferase hexapeptide repeat family. LpxD subfamily. In terms of assembly, homotrimer.

It catalyses the reaction a UDP-3-O-[(3R)-3-hydroxyacyl]-alpha-D-glucosamine + a (3R)-hydroxyacyl-[ACP] = a UDP-2-N,3-O-bis[(3R)-3-hydroxyacyl]-alpha-D-glucosamine + holo-[ACP] + H(+). The protein operates within bacterial outer membrane biogenesis; LPS lipid A biosynthesis. Functionally, catalyzes the N-acylation of UDP-3-O-acylglucosamine using 3-hydroxyacyl-ACP as the acyl donor. Is involved in the biosynthesis of lipid A, a phosphorylated glycolipid that anchors the lipopolysaccharide to the outer membrane of the cell. The sequence is that of UDP-3-O-acylglucosamine N-acyltransferase from Rickettsia massiliae (strain Mtu5).